Reading from the N-terminus, the 799-residue chain is Cadherin-8 (799 aa).

A signal peptide spans 1 to 29 (MPERLAETLMDLWTPLIILWITLPSCVYT). The propeptide occupies 30-61 (APMNQAHVLTTGSPLELSRQSEDMRILSRSKR). 5 Cadherin domains span residues 62–167 (GWVW…APEF), 168–276 (LNGP…PPKF), 277–391 (AQSL…PPVF), 392–494 (SSPT…DNAP), and 495–616 (EFAS…YVLP). The Extracellular segment spans residues 62–621 (GWVWNQMFVL…AYVLPIGLSM (560 aa)). Residue Asn-188 is glycosylated (N-linked (GlcNAc...) asparagine). 3 N-linked (GlcNAc...) asparagine glycosylation sites follow: Asn-463, Asn-473, and Asn-544. The chain crosses the membrane as a helical span at residues 622–642 (GALIAILACIILLLVIVVLFV). Topologically, residues 643–799 (TLRRHKNEPL…YSVGESDKET (157 aa)) are cytoplasmic. Ser-795 bears the Phosphoserine mark.

It localises to the cell membrane. In terms of biological role, cadherins are calcium-dependent cell adhesion proteins. They preferentially interact with themselves in a homophilic manner in connecting cells; cadherins may thus contribute to the sorting of heterogeneous cell types. This chain is Cadherin-8 (Cdh8), found in Mus musculus (Mouse).